Reading from the N-terminus, the 122-residue chain is Large ribosomal subunit protein uL14 (122 aa).

Belongs to the universal ribosomal protein uL14 family. As to quaternary structure, part of the 50S ribosomal subunit. Forms a cluster with proteins L3 and L19. In the 70S ribosome, L14 and L19 interact and together make contacts with the 16S rRNA in bridges B5 and B8.

Its function is as follows. Binds to 23S rRNA. Forms part of two intersubunit bridges in the 70S ribosome. The chain is Large ribosomal subunit protein uL14 from Halorhodospira halophila (strain DSM 244 / SL1) (Ectothiorhodospira halophila (strain DSM 244 / SL1)).